The sequence spans 123 residues: SGSCEVKTCWWSQPDFRVIGDFLKDKYDSASEMVVEKHRESRGWVETLRPKYTFFKPPTERDLVYYESSPNFCEPNPETGSFGTRDRICNVTSHGIDGCDLLCCGRGHNTRTEKRKEKCHCIF.

Ser1 carries the O-palmitoleoyl serine lipid modification. Cys89 and Cys104 are oxidised to a cystine. Residue Asn90 is glycosylated (N-linked (GlcNAc...) asparagine).

The protein belongs to the Wnt family. Post-translationally, disulfide bonds have critical and distinct roles in secretion and activity. Loss of each conserved cysteine results in high molecular weight oxidized Wnt oligomers, which are formed through inter-Wnt disulfide bonding. In terms of processing, palmitoleoylation is required for efficient binding to frizzled receptors. Depalmitoleoylation leads to Wnt signaling pathway inhibition.

It is found in the secreted. The protein localises to the extracellular space. Its subcellular location is the extracellular matrix. In terms of biological role, ligand for members of the frizzled family of seven transmembrane receptors. Functions in the canonical Wnt signaling pathway that results in activation of transcription factors of the TCF/LEF family. Required for normal embryonic mesoderm development and formation of caudal somites. Required for normal morphogenesis of the developing neural tube. The protein is Protein Wnt-3a (WNT-3A) of Plethodon jordani (Red-cheeked salamander).